The following is a 102-amino-acid chain: NADH-quinone oxidoreductase subunit K (102 aa).

The next 3 membrane-spanning stretches (helical) occupy residues 5 to 25 (LSHYLTVSAILFTLGVFGIFL), 31 to 51 (IVILMSVELILLAVNINMVAF), and 65 to 85 (LFILTVAAAEAAIGLAILVVF).

This sequence belongs to the complex I subunit 4L family. In terms of assembly, NDH-1 is composed of 14 different subunits. Subunits NuoA, H, J, K, L, M, N constitute the membrane sector of the complex.

It is found in the cell inner membrane. The enzyme catalyses a quinone + NADH + 5 H(+)(in) = a quinol + NAD(+) + 4 H(+)(out). In terms of biological role, NDH-1 shuttles electrons from NADH, via FMN and iron-sulfur (Fe-S) centers, to quinones in the respiratory chain. The immediate electron acceptor for the enzyme in this species is believed to be ubiquinone. Couples the redox reaction to proton translocation (for every two electrons transferred, four hydrogen ions are translocated across the cytoplasmic membrane), and thus conserves the redox energy in a proton gradient. This is NADH-quinone oxidoreductase subunit K from Rhizobium leguminosarum bv. trifolii (strain WSM2304).